A 47-amino-acid chain; its full sequence is Large ribosomal subunit protein bL34 (47 aa).

Basic residues-rich tracts occupy residues 1–22 (MAKG…HGFR) and 36–47 (ARRRKGRKSLTA). The interval 1–47 (MAKGKRTFQPNNRRRSRVHGFRSRMSTRAGRAIVSARRRKGRKSLTA) is disordered.

The protein belongs to the bacterial ribosomal protein bL34 family.

In Corynebacterium kroppenstedtii (strain DSM 44385 / JCM 11950 / CIP 105744 / CCUG 35717), this protein is Large ribosomal subunit protein bL34.